We begin with the raw amino-acid sequence, 152 residues long: SsrA-binding protein (152 aa).

Belongs to the SmpB family.

The protein localises to the cytoplasm. Its function is as follows. Required for rescue of stalled ribosomes mediated by trans-translation. Binds to transfer-messenger RNA (tmRNA), required for stable association of tmRNA with ribosomes. tmRNA and SmpB together mimic tRNA shape, replacing the anticodon stem-loop with SmpB. tmRNA is encoded by the ssrA gene; the 2 termini fold to resemble tRNA(Ala) and it encodes a 'tag peptide', a short internal open reading frame. During trans-translation Ala-aminoacylated tmRNA acts like a tRNA, entering the A-site of stalled ribosomes, displacing the stalled mRNA. The ribosome then switches to translate the ORF on the tmRNA; the nascent peptide is terminated with the 'tag peptide' encoded by the tmRNA and targeted for degradation. The ribosome is freed to recommence translation, which seems to be the essential function of trans-translation. The polypeptide is SsrA-binding protein (Rickettsia montanensis).